The sequence spans 434 residues: UDP-N-acetylglucosamine 1-carboxyvinyltransferase (434 aa).

22 to 23 lines the phosphoenolpyruvate pocket; that stretch reads KN. Arginine 99 lines the UDP-N-acetyl-alpha-D-glucosamine pocket. The active-site Proton donor is the cysteine 123. At cysteine 123 the chain carries 2-(S-cysteinyl)pyruvic acid O-phosphothioketal. UDP-N-acetyl-alpha-D-glucosamine is bound by residues 128 to 132, aspartate 317, and isoleucine 339; that span reads RPVDQ.

This sequence belongs to the EPSP synthase family. MurA subfamily.

It is found in the cytoplasm. The catalysed reaction is phosphoenolpyruvate + UDP-N-acetyl-alpha-D-glucosamine = UDP-N-acetyl-3-O-(1-carboxyvinyl)-alpha-D-glucosamine + phosphate. It participates in cell wall biogenesis; peptidoglycan biosynthesis. Its function is as follows. Cell wall formation. Adds enolpyruvyl to UDP-N-acetylglucosamine. The polypeptide is UDP-N-acetylglucosamine 1-carboxyvinyltransferase (Paracidovorax citrulli (strain AAC00-1) (Acidovorax citrulli)).